The following is a 487-amino-acid chain: Probable aspartic-type endopeptidase opsB (487 aa).

Residues 1–20 (MQKSWLVLLVACLGLQGTTA) form the signal peptide. A Peptidase A1 domain is found at 69-398 (YFCNITLGTP…DLSNNEISLA (330 aa)). N72 carries N-linked (GlcNAc...) asparagine glycosylation. D87 is an active-site residue. 4 N-linked (GlcNAc...) asparagine glycosylation sites follow: N99, N111, N132, and N272. The active site involves D286. 2 N-linked (GlcNAc...) asparagine glycosylation sites follow: N329 and N403. A lipid anchor (GPI-anchor amidated alanine) is attached at A463. A propeptide spans 464-487 (PAGPTDVPKHLVLGAAAIGYVLAF) (removed in mature form).

The protein belongs to the peptidase A1 family.

The protein localises to the cell membrane. Functionally, probable GPI-anchored aspartic-type endopeptidase. This chain is Probable aspartic-type endopeptidase opsB (opsB), found in Aspergillus oryzae (strain ATCC 42149 / RIB 40) (Yellow koji mold).